Here is a 158-residue protein sequence, read N- to C-terminus: NAD(P)H-quinone oxidoreductase subunit J, chloroplastic (158 aa).

The protein belongs to the complex I 30 kDa subunit family. As to quaternary structure, NDH is composed of at least 16 different subunits, 5 of which are encoded in the nucleus.

The protein resides in the plastid. It localises to the chloroplast thylakoid membrane. It carries out the reaction a plastoquinone + NADH + (n+1) H(+)(in) = a plastoquinol + NAD(+) + n H(+)(out). The catalysed reaction is a plastoquinone + NADPH + (n+1) H(+)(in) = a plastoquinol + NADP(+) + n H(+)(out). Functionally, NDH shuttles electrons from NAD(P)H:plastoquinone, via FMN and iron-sulfur (Fe-S) centers, to quinones in the photosynthetic chain and possibly in a chloroplast respiratory chain. The immediate electron acceptor for the enzyme in this species is believed to be plastoquinone. Couples the redox reaction to proton translocation, and thus conserves the redox energy in a proton gradient. The chain is NAD(P)H-quinone oxidoreductase subunit J, chloroplastic from Angiopteris evecta (Mule's foot fern).